Here is a 437-residue protein sequence, read N- to C-terminus: 5-hydroxytryptamine receptor 3B (437 aa).

Residues 1-21 (MILLWSCLLVAVVGILGTATP) form the signal peptide. Topologically, residues 22–238 (QPGNSSLHRL…VVIRRCPLAY (217 aa)) are extracellular. N-linked (GlcNAc...) asparagine glycosylation is found at N25, N92, and N134. C151 and C165 are joined by a disulfide. A helical transmembrane segment spans residues 239 to 259 (VVSLLIPSIFLMLVDLGSFYL). At 260–264 (PPNCR) the chain is on the cytoplasmic side. A helical transmembrane segment spans residues 265–282 (ARIVFKTNVLVGYTVFRV). N283 is a glycosylation site (N-linked (GlcNAc...) asparagine). The Extracellular portion of the chain corresponds to 283–292 (NMSDEVPRSA). A helical transmembrane segment spans residues 293-313 (GCTPLIGVFFTVCMALLVLSL). The Cytoplasmic segment spans residues 314–410 (SKSILLIKFL…WLAILYRFDQ (97 aa)). Residues 377–409 (FWFQFRSINNSLRTRDQIHQKEVEWLAILYRFD) form an HA-stretch; determines single-channel conductance in 5-HT3 receptors region. Residues 411–431 (LLFRIYLAVLGLYTVTLCSLW) traverse the membrane as a helical segment. Residues 432–437 (ALWSRM) lie on the Extracellular side of the membrane.

This sequence belongs to the ligand-gated ion channel (TC 1.A.9) family. 5-hydroxytryptamine receptor (TC 1.A.9.2) subfamily. HTR3B sub-subfamily. As to quaternary structure, forms homopentameric as well as heteropentameric serotonin-activated cation-selective channel complexes with HTR3A. The homomeric complex is not functional. Heteropentameric complexes display properties which resemble that of neuronal serotonin-activated channels in vivo. N-glycosylation is required for membrane localization.

The protein localises to the postsynaptic cell membrane. The protein resides in the cell membrane. The catalysed reaction is Na(+)(in) = Na(+)(out). It catalyses the reaction K(+)(in) = K(+)(out). It carries out the reaction Ca(2+)(in) = Ca(2+)(out). In terms of biological role, forms serotonin (5-hydroxytryptamine/5-HT3)-activated cation-selective channel complexes, which when activated cause fast, depolarizing responses in neurons. This Mus musculus (Mouse) protein is 5-hydroxytryptamine receptor 3B.